The chain runs to 1803 residues: 6-methylsalicylic acid synthase (1803 aa).

The segment at 1 to 40 (MEVHGDEVLSVDSGVSTPPSTGSGFRRPLETPGTEIGNLN) is disordered. Positions 13-24 (SGVSTPPSTGSG) are enriched in low complexity. Residues 44 to 470 (QNEVAVVGMA…GTVSHAIIEE (427 aa)) enclose the Ketosynthase family 3 (KS3) domain. Residues Cys216, His351, and His391 each act as for beta-ketoacyl synthase activity in the active site. In terms of domain architecture, Malonyl-CoA:ACP transacylase (MAT) spans 581–894 (VWVFSGHGAQ…SIAQLHCRGA (314 aa)). Ser667 acts as the For malonyltransferase activity in catalysis. The interval 940–1058 (HTLLGQRVPV…GQWEAGGSKN (119 aa)) is N-terminal hotdog fold. A PKS/mFAS DH domain is found at 940–1218 (HTLLGQRVPV…FSEIEGTPGS (279 aa)). Residue His972 is the Proton acceptor; for thioesterase activity of the active site. The segment at 1073–1218 (ANNKLADNFS…FSEIEGTPGS (146 aa)) is C-terminal hotdog fold. Asp1129 functions as the Proton donor; for thioesterase activity in the catalytic mechanism. A required for homotetramer formation region spans residues 1141 to 1262 (TSVGSTLFFD…KNVADLYCGS (122 aa)). Residues 1434-1628 (STYLITGGLG…AVAVQWTSWR (195 aa)) form the Ketoreductase (KR) domain. The span at 1701–1710 (ASSADAPSAA) shows a compositional bias: low complexity. Residues 1701 to 1721 (ASSADAPSAAPKETNEMPESI) form a disordered region. One can recognise a Carrier domain in the interval 1726 to 1801 (TWLDERIRDC…HLVGWFLEKM (76 aa)). The residue at position 1761 (Ser1761) is an O-(pantetheine 4'-phosphoryl)serine. The required for catalytic activity stretch occupies residues 1783–1803 (LTWSCPTVSHLVGWFLEKMGN).

As to quaternary structure, homotetramer.

The enzyme catalyses 3 malonyl-CoA + acetyl-CoA + NADPH + 3 H(+) = 6-methylsalicylate + 3 CO2 + NADP(+) + 4 CoA + H2O. Its pathway is secondary metabolite biosynthesis. Functionally, 6-methylsalicylic acid synthase; part of the gene cluster that mediates the biosynthesis of terreic acid, a quinone epoxide inhibitor of Bruton's tyrosine kinase. The first step of the pathway is the synthesis of 6-methylsalicylic acid (6-MSA) by the 6-methylsalicylic acid synthase atX. In the biosynthesis of 6-MSA, atX utilizes one acetyl-CoA and three malonyl-CoAs as its substrates and catalyzes a series of programmed reactions including Claisen condensation, reduction, aldol cyclization, and the hydrolytic cleavage that yields 6-MSA. The 6-methylsalicylate 1-monooxygenase atA then catalyzes the decarboxylative hydroxylation of 6-MSA to 3-methylcatechol. The next step is the conversion of 3-methylcatechol to 3-methyl-1,2,4-benzenetriol by cytochrome P450 monooxygenase atE, which is enhanced by cytochrome P450 monooxygenase atG. Then, the epoxidase atD catalyzes the epoxidation and hydroxyl oxidation of 3-methyl-1,2,4-benzenetriol to terremutin. Lastly, GMC oxidoreductase atC oxidizes terremutin to terreic acid. In Aspergillus terreus (strain NIH 2624 / FGSC A1156), this protein is 6-methylsalicylic acid synthase.